The following is a 187-amino-acid chain: MNHEELINSLTKKMNGALQVLDADLKGLRVGQASAYFLDPVQVEAYNSRVPILQVATISVSDTKTILVQVWDKSLVKAVKKAIMEANLGVSIISDDNQIIRLQLPIPSEERRKELVKIAHKYQEKSKIIVRNIRRDGIELIKQMEQNTECSKDEAHIYSKEIQELTDKYCDKIDKIIKLKEQDIINL.

The protein belongs to the RRF family.

Its subcellular location is the cytoplasm. Responsible for the release of ribosomes from messenger RNA at the termination of protein biosynthesis. May increase the efficiency of translation by recycling ribosomes from one round of translation to another. The polypeptide is Ribosome-recycling factor (Orientia tsutsugamushi (strain Boryong) (Rickettsia tsutsugamushi)).